We begin with the raw amino-acid sequence, 365 residues long: Phosphate acyltransferase (365 aa).

Belongs to the PlsX family. As to quaternary structure, homodimer. Probably interacts with PlsY.

The protein resides in the cytoplasm. It catalyses the reaction a fatty acyl-[ACP] + phosphate = an acyl phosphate + holo-[ACP]. Its pathway is lipid metabolism; phospholipid metabolism. Functionally, catalyzes the reversible formation of acyl-phosphate (acyl-PO(4)) from acyl-[acyl-carrier-protein] (acyl-ACP). This enzyme utilizes acyl-ACP as fatty acyl donor, but not acyl-CoA. The sequence is that of Phosphate acyltransferase from Picosynechococcus sp. (strain ATCC 27264 / PCC 7002 / PR-6) (Agmenellum quadruplicatum).